A 534-amino-acid chain; its full sequence is DM7 family protein GE17491 (534 aa).

This sequence belongs to the DM7 family.

The protein is DM7 family protein GE17491 of Drosophila yakuba (Fruit fly).